Consider the following 206-residue polypeptide: Ribosomal RNA large subunit methyltransferase E (206 aa).

S-adenosyl-L-methionine-binding residues include G60, W62, D80, D96, and D121. Residue K161 is the Proton acceptor of the active site.

The protein belongs to the class I-like SAM-binding methyltransferase superfamily. RNA methyltransferase RlmE family.

It is found in the cytoplasm. The enzyme catalyses uridine(2552) in 23S rRNA + S-adenosyl-L-methionine = 2'-O-methyluridine(2552) in 23S rRNA + S-adenosyl-L-homocysteine + H(+). Specifically methylates the uridine in position 2552 of 23S rRNA at the 2'-O position of the ribose in the fully assembled 50S ribosomal subunit. The protein is Ribosomal RNA large subunit methyltransferase E of Legionella pneumophila (strain Paris).